The sequence spans 343 residues: N-acetyl-gamma-glutamyl-phosphate reductase (343 aa).

Cys149 is an active-site residue.

This sequence belongs to the NAGSA dehydrogenase family. Type 1 subfamily.

It localises to the cytoplasm. It catalyses the reaction N-acetyl-L-glutamate 5-semialdehyde + phosphate + NADP(+) = N-acetyl-L-glutamyl 5-phosphate + NADPH + H(+). It functions in the pathway amino-acid biosynthesis; L-arginine biosynthesis; N(2)-acetyl-L-ornithine from L-glutamate: step 3/4. Functionally, catalyzes the NADPH-dependent reduction of N-acetyl-5-glutamyl phosphate to yield N-acetyl-L-glutamate 5-semialdehyde. The chain is N-acetyl-gamma-glutamyl-phosphate reductase from Exiguobacterium sibiricum (strain DSM 17290 / CCUG 55495 / CIP 109462 / JCM 13490 / 255-15).